The following is a 145-amino-acid chain: Lysozyme-like protein 4 (145 aa).

The signal sequence occupies residues 1–19 (MQLYLVLLLISYLLTPIGA). The C-type lysozyme domain maps to 20–145 (SILGRCVVAK…LDRWLDGCEL (126 aa)). 4 cysteine pairs are disulfide-bonded: C25–C143, C49–C130, C84–C95, and C91–C109. Residue E54 is part of the active site.

Belongs to the glycosyl hydrolase 22 family. Monomer. As to expression, expressed in the brain, lung, ovary, uterus and testis. In testis expressed in the germinal epithelium and on the maturing spermatozoa (at protein level).

It is found in the secreted. The protein localises to the cytoplasmic vesicle. The protein resides in the secretory vesicle. Its subcellular location is the acrosome. It localises to the cell projection. It is found in the cilium. The protein localises to the flagellum. May be involved in fertilization. Has no detectable bacteriolytic and lysozyme activities in vitro. The polypeptide is Lysozyme-like protein 4 (Lyzl4) (Rattus norvegicus (Rat)).